The sequence spans 276 residues: Putative oxidoreductase SadH (276 aa).

Serine 142 is a binding site for substrate. The active-site Proton acceptor is the tyrosine 155.

Belongs to the short-chain dehydrogenases/reductases (SDR) family.

Functionally, required for maintaining the appropriate mycolic acid composition and permeability of the envelope on its exposure to acidic pH. In Mycobacterium tuberculosis (strain CDC 1551 / Oshkosh), this protein is Putative oxidoreductase SadH (sadH).